The primary structure comprises 343 residues: UDP-glucuronic acid decarboxylase 6 (343 aa).

The disordered stretch occupies residues 1–22 (MASNSSNGTTTTKPPPMPSPLR). Ala2 carries the N-acetylalanine modification. Residue 62-87 (DNYFTGSKDNLKKWIGHPRFELIRHD) coordinates NAD(+). Arg171 contributes to the substrate binding site. Catalysis depends on Tyr174, which acts as the Proton acceptor. 174–178 (YDEGK) serves as a coordination point for NAD(+). Position 203 (Asn203) interacts with substrate. Position 215 (Arg215) interacts with NAD(+). Substrate is bound by residues 216–220 (VVSNF), 233–240 (QKPGTQTR), and 300–304 (DPRQR).

It belongs to the NAD(P)-dependent epimerase/dehydratase family. UDP-glucuronic acid decarboxylase subfamily. It depends on NAD(+) as a cofactor.

It localises to the cytoplasm. The catalysed reaction is UDP-alpha-D-glucuronate + H(+) = UDP-alpha-D-xylose + CO2. It functions in the pathway nucleotide-sugar biosynthesis; UDP-alpha-D-xylose biosynthesis; UDP-alpha-D-xylose from UDP-alpha-D-glucuronate: step 1/1. Catalyzes the NAD-dependent decarboxylation of UDP-glucuronic acid to UDP-xylose. Necessary for the biosynthesis of the core tetrasaccharide in glycosaminoglycan biosynthesis. In Arabidopsis thaliana (Mouse-ear cress), this protein is UDP-glucuronic acid decarboxylase 6 (UXS6).